Consider the following 443-residue polypeptide: Histidinol dehydrogenase (443 aa).

Residues Tyr127, Gln185, and Asn208 each contribute to the NAD(+) site. Residues Ser234, Gln256, and His259 each contribute to the substrate site. Zn(2+) contacts are provided by Gln256 and His259. Active-site proton acceptor residues include Glu323 and His324. His324, Asp357, Glu411, and His416 together coordinate substrate. Asp357 contacts Zn(2+). Residue His416 coordinates Zn(2+).

Belongs to the histidinol dehydrogenase family. Zn(2+) is required as a cofactor.

It carries out the reaction L-histidinol + 2 NAD(+) + H2O = L-histidine + 2 NADH + 3 H(+). It participates in amino-acid biosynthesis; L-histidine biosynthesis; L-histidine from 5-phospho-alpha-D-ribose 1-diphosphate: step 9/9. Catalyzes the sequential NAD-dependent oxidations of L-histidinol to L-histidinaldehyde and then to L-histidine. The chain is Histidinol dehydrogenase from Photobacterium profundum (strain SS9).